The sequence spans 326 residues: Undecaprenyl-phosphate 4-deoxy-4-formamido-L-arabinose transferase (326 aa).

The next 2 membrane-spanning stretches (helical) occupy residues 235-255 (LLSV…VLLI) and 270-290 (VFTL…GMGL).

Belongs to the glycosyltransferase 2 family.

Its subcellular location is the cell inner membrane. The enzyme catalyses UDP-4-deoxy-4-formamido-beta-L-arabinose + di-trans,octa-cis-undecaprenyl phosphate = 4-deoxy-4-formamido-alpha-L-arabinopyranosyl di-trans,octa-cis-undecaprenyl phosphate + UDP. It functions in the pathway glycolipid biosynthesis; 4-amino-4-deoxy-alpha-L-arabinose undecaprenyl phosphate biosynthesis; 4-amino-4-deoxy-alpha-L-arabinose undecaprenyl phosphate from UDP-4-deoxy-4-formamido-beta-L-arabinose and undecaprenyl phosphate: step 1/2. It participates in bacterial outer membrane biogenesis; lipopolysaccharide biosynthesis. Its function is as follows. Catalyzes the transfer of 4-deoxy-4-formamido-L-arabinose from UDP to undecaprenyl phosphate. The modified arabinose is attached to lipid A and is required for resistance to polymyxin and cationic antimicrobial peptides. This Serratia proteamaculans (strain 568) protein is Undecaprenyl-phosphate 4-deoxy-4-formamido-L-arabinose transferase.